The sequence spans 296 residues: Probable endonuclease 4 (296 aa).

Zn(2+) contacts are provided by His68, His108, Glu145, Asp179, His182, His216, Asp229, His231, and Glu261.

It belongs to the AP endonuclease 2 family. It depends on Zn(2+) as a cofactor.

It catalyses the reaction Endonucleolytic cleavage to 5'-phosphooligonucleotide end-products.. In terms of biological role, endonuclease IV plays a role in DNA repair. It cleaves phosphodiester bonds at apurinic or apyrimidinic (AP) sites, generating a 3'-hydroxyl group and a 5'-terminal sugar phosphate. The sequence is that of Probable endonuclease 4 from Geobacter sulfurreducens (strain ATCC 51573 / DSM 12127 / PCA).